Here is a 301-residue protein sequence, read N- to C-terminus: Homeobox protein Hox-D13 (301 aa).

Disordered regions lie at residues 1–20 (MDGL…TPGQ) and 55–75 (GERS…PGSG). A compositionally biased stretch (gly residues) spans 8-18 (SSGGGGGGGTP). The homeobox DNA-binding region spans 234–293 (GRKKRVPYTKLQLKELENEYAINKFINKDKRRRISAATNLSERQVTIWFQNRRVKDKKIV).

This sequence belongs to the Abd-B homeobox family.

The protein resides in the nucleus. Functionally, sequence-specific transcription factor that binds gene promoters and activates their transcription. Part of a developmental regulatory system that provides cells with specific positional identities on the anterior-posterior axis. In Gallus gallus (Chicken), this protein is Homeobox protein Hox-D13 (HOXD13).